A 231-amino-acid chain; its full sequence is NADH-ubiquinone oxidoreductase chain 4 (231 aa).

A run of 6 helical transmembrane segments spans residues 1–21 (PIAG…YGII), 34–54 (MFLP…LTCL), 63–85 (IAYS…TPWG), 89–111 (AMAL…NTTY), 128–148 (ILPM…AVPP), and 156–176 (LLIM…LGLS).

The protein belongs to the complex I subunit 4 family.

It localises to the mitochondrion membrane. It catalyses the reaction a ubiquinone + NADH + 5 H(+)(in) = a ubiquinol + NAD(+) + 4 H(+)(out). Functionally, core subunit of the mitochondrial membrane respiratory chain NADH dehydrogenase (Complex I) that is believed to belong to the minimal assembly required for catalysis. Complex I functions in the transfer of electrons from NADH to the respiratory chain. The immediate electron acceptor for the enzyme is believed to be ubiquinone. The protein is NADH-ubiquinone oxidoreductase chain 4 (MT-ND4) of Agkistrodon contortrix contortrix (Southern copperhead).